Here is a 955-residue protein sequence, read N- to C-terminus: Glutamyl aminopeptidase (955 aa).

The Cytoplasmic portion of the chain corresponds to 1–17; the sequence is MDIEDKTSKMHCMKGKH. A helical; Signal-anchor for type II membrane protein transmembrane segment spans residues 18-38; sequence VVIICGVVIAVGLILGLGLGL. Over 39 to 955 the chain is Extracellular; the sequence is GLDTKACNPP…LENSEHSNFA (917 aa). Asparagine 118 and asparagine 192 each carry an N-linked (GlcNAc...) asparagine glycan. Residue glutamate 218 coordinates substrate. Residues asparagine 319 and asparagine 335 are each glycosylated (N-linked (GlcNAc...) asparagine). 352-356 is a substrate binding site; sequence GAMEN. Histidine 388 provides a ligand contact to Zn(2+). Glutamate 389 acts as the Proton acceptor in catalysis. Zn(2+)-binding residues include histidine 392 and glutamate 411. N-linked (GlcNAc...) asparagine glycans are attached at residues asparagine 458, asparagine 547, asparagine 584, asparagine 592, asparagine 674, asparagine 759, asparagine 823, and asparagine 836. Arginine 882 contacts substrate.

The protein belongs to the peptidase M1 family. In terms of assembly, homodimer; disulfide-linked. Zn(2+) is required as a cofactor. In terms of processing, N-glycosylated. Glycosylation counts for an increased mass of about 32% of the protein mass (about 48 kDa).

It is found in the cell membrane. The catalysed reaction is Release of N-terminal glutamate (and to a lesser extent aspartate) from a peptide.. Substrate specificity is modulated by calcium which enhances the enzymatic activity for cleavage of acidic residues while reducing its activity with neutral and basic residues. Hydrolytic activity is inhibited by the aminopeptidase inhibitor (Leu and acidic inhibitor) amastatin, but not by bestatin (aminopeptidase inhibitor Leu inhibitor), leupeptin, pepstatin A and PMSF. Its hydrolytic activity is also strongly reduced by zinc ions, with a complete inhibition at 0.5 mM, and moderately inhibited by cobalt and copper ions. In terms of biological role, venom protein that cleaves N-terminal acidic residues from peptides with high potency in presence of calcium. It may have several roles in venom including alteration of blood pressure by cleaving circulating angiotensin-2, general degradation of host tissue, increase of permeability to other venom components, and/or processing of other toxins in the venom. The polypeptide is Glutamyl aminopeptidase (Bitis rhinoceros (West African gaboon viper)).